A 622-amino-acid chain; its full sequence is DNA-directed RNA polymerase subunit gamma (622 aa).

Residues cysteine 70, cysteine 72, cysteine 85, and cysteine 88 each contribute to the Zn(2+) site. The Mg(2+) site is built by aspartate 466, aspartate 468, and aspartate 470.

It belongs to the RNA polymerase beta' chain family. RpoC1 subfamily. As to quaternary structure, in cyanobacteria the RNAP catalytic core is composed of 2 alpha, 1 beta, 1 beta', 1 gamma and 1 omega subunit. When a sigma factor is associated with the core the holoenzyme is formed, which can initiate transcription. Mg(2+) is required as a cofactor. Requires Zn(2+) as cofactor.

The catalysed reaction is RNA(n) + a ribonucleoside 5'-triphosphate = RNA(n+1) + diphosphate. In terms of biological role, DNA-dependent RNA polymerase catalyzes the transcription of DNA into RNA using the four ribonucleoside triphosphates as substrates. This chain is DNA-directed RNA polymerase subunit gamma, found in Cyanothece sp. (strain PCC 7425 / ATCC 29141).